We begin with the raw amino-acid sequence, 285 residues long: Probable endonuclease 4 (285 aa).

Zn(2+) is bound by residues H69, H109, E145, D179, H182, H216, D229, H231, and E261.

It belongs to the AP endonuclease 2 family. Zn(2+) is required as a cofactor.

It carries out the reaction Endonucleolytic cleavage to 5'-phosphooligonucleotide end-products.. In terms of biological role, endonuclease IV plays a role in DNA repair. It cleaves phosphodiester bonds at apurinic or apyrimidinic (AP) sites, generating a 3'-hydroxyl group and a 5'-terminal sugar phosphate. This chain is Probable endonuclease 4, found in Shigella boydii serotype 4 (strain Sb227).